The following is a 296-amino-acid chain: Arginine/serine-rich protein 1 (296 aa).

The disordered stretch occupies residues 1 to 131; it reads MSNYVNDMWP…RSRSRSRERS (131 aa). Ser12 is modified (phosphoserine). A compositionally biased stretch (low complexity) spans 20–31; the sequence is SASRSGGSSRLS. Basic residues predominate over residues 32 to 125; that stretch reads SRSRSRSFSR…RSRSRSRSRS (94 aa). Ser111 and Ser113 each carry phosphoserine. Position 141 is an omega-N-methylarginine (Arg141). Over residues 156-165 the composition is skewed to basic and acidic residues; that stretch reads ERSRWRDRSR. Disordered regions lie at residues 156–175 and 217–296; these read ERSR…TPFR and SHGI…WIPV. Over residues 245 to 261 the composition is skewed to polar residues; that stretch reads EKPSQQRSIAFSSNNSV. A compositionally biased stretch (basic and acidic residues) spans 272 to 287; the sequence is ATEETSSRSPKIDKKK. At Ser280 the chain carries Phosphoserine.

It belongs to the RSRP family. Post-translationally, phosphorylated. Phosphorylation at Ser-111 and Ser-113 mediates the interaction with spliceosome proteins.

Its subcellular location is the nucleus. Probably acts as a spliceosomal factor that contributes to spliceosome assembly and regulates the isoform switching of proteins such as PARP6. The protein is Arginine/serine-rich protein 1 (RSRP1) of Macaca fascicularis (Crab-eating macaque).